The sequence spans 409 residues: Adenosine deaminase (409 aa).

Zn(2+) is bound by residues His65, His67, His207, and Asp314.

This sequence belongs to the metallo-dependent hydrolases superfamily. Zn(2+) serves as cofactor.

It carries out the reaction adenosine + H2O + H(+) = inosine + NH4(+). Functionally, catalyzes the deamination of adenosine into inosine. Is also able to deaminate adenine, but with considerably less efficiency. Is not active toward 6-chloroadenine. This Helicobacter pylori (strain ATCC 700392 / 26695) (Campylobacter pylori) protein is Adenosine deaminase.